Reading from the N-terminus, the 345-residue chain is MLTQRQDNILHQIIHNYTNLGKPIGSKTLMEEGIAASSATIRNEMKTLEEYGLLVKPHSSSGRIPSLKGYRYYVDYLLEPEKLKKSEVDVMQQSLGKDFHEINDIIEQSAKILSKLTSYTALSIGPDVSNRKLTGFKMVPLNNRQVIAIIVTDKGNVENQVFSIPKSVDSEDLEKMVRIINDKLIGEPLLIVYQRLGTEIPMILHKYFQTTEGILDLFNNMLSEAFEEKIFVGGQMNLLNSDQIQNIDQFKSMLFMENSKQLNELLSTKDQPIQIRIGSELGNDLLSDMSLIQANYEIKDHGNGTIALLGSASMPYSKMLSLLDVFRQELAETLDDYYRSIDSFG.

This sequence belongs to the HrcA family.

In terms of biological role, negative regulator of class I heat shock genes (grpE-dnaK-dnaJ and groELS operons). Prevents heat-shock induction of these operons. The polypeptide is Heat-inducible transcription repressor HrcA (Tetragenococcus halophilus (Pediococcus halophilus)).